We begin with the raw amino-acid sequence, 100 residues long: NADH-quinone oxidoreductase subunit K (100 aa).

Transmembrane regions (helical) follow at residues 1 to 21 (MIGLNHYLIVSGLLFCIGLAG), 28 to 48 (ILLLFFSTEIMLNAINIGFVA), and 64 to 84 (FIISIAASEVAIGLGLVILWF).

It belongs to the complex I subunit 4L family. In terms of assembly, NDH-1 is composed of 14 different subunits. Subunits NuoA, H, J, K, L, M, N constitute the membrane sector of the complex.

The protein localises to the cell inner membrane. It catalyses the reaction a quinone + NADH + 5 H(+)(in) = a quinol + NAD(+) + 4 H(+)(out). In terms of biological role, NDH-1 shuttles electrons from NADH, via FMN and iron-sulfur (Fe-S) centers, to quinones in the respiratory chain. The immediate electron acceptor for the enzyme in this species is believed to be ubiquinone. Couples the redox reaction to proton translocation (for every two electrons transferred, four hydrogen ions are translocated across the cytoplasmic membrane), and thus conserves the redox energy in a proton gradient. The polypeptide is NADH-quinone oxidoreductase subunit K (Helicobacter pylori (strain ATCC 700392 / 26695) (Campylobacter pylori)).